Reading from the N-terminus, the 503-residue chain is Cytochrome P450 7A1 (503 aa).

Residues 4–24 traverse the membrane as a helical segment; sequence ISLIWGIAVLVSCCIWFIVGI. Cysteine 444 is a binding site for heme.

This sequence belongs to the cytochrome P450 family. The cofactor is heme. Detected in liver (at protein level). Liver.

It localises to the endoplasmic reticulum membrane. The protein localises to the microsome membrane. It carries out the reaction cholesterol + reduced [NADPH--hemoprotein reductase] + O2 = 7alpha-hydroxycholesterol + oxidized [NADPH--hemoprotein reductase] + H2O + H(+). The enzyme catalyses 4beta-hydroxycholesterol + reduced [NADPH--hemoprotein reductase] + O2 = 4beta,7alpha-dihydroxycholesterol + oxidized [NADPH--hemoprotein reductase] + H2O + H(+). The catalysed reaction is lathosterol + reduced [NADPH--hemoprotein reductase] + O2 = 7alpha,8alpha-epoxy-5alpha-cholestan-3beta-ol + oxidized [NADPH--hemoprotein reductase] + H2O + H(+). It catalyses the reaction lathosterol + reduced [NADPH--hemoprotein reductase] + O2 = 5alpha-cholestan-7-oxo-3beta-ol + oxidized [NADPH--hemoprotein reductase] + H2O + H(+). It carries out the reaction 7-dehydrocholesterol + reduced [NADPH--hemoprotein reductase] + O2 = 7-oxocholesterol + oxidized [NADPH--hemoprotein reductase] + H2O + H(+). The enzyme catalyses (24S)-hydroxycholesterol + reduced [NADPH--hemoprotein reductase] + O2 = (24S)-7alpha-dihydroxycholesterol + oxidized [NADPH--hemoprotein reductase] + H2O + H(+). The catalysed reaction is (24R)-hydroxycholesterol + reduced [NADPH--hemoprotein reductase] + O2 = (24R)-7alpha-dihydroxycholesterol + oxidized [NADPH--hemoprotein reductase] + H2O + H(+). It participates in lipid metabolism; bile acid biosynthesis. The protein operates within steroid metabolism; cholesterol degradation. Functionally, a cytochrome P450 monooxygenase involved in the metabolism of endogenous cholesterol and its oxygenated derivatives (oxysterols). Mechanistically, uses molecular oxygen inserting one oxygen atom into a substrate, and reducing the second into a water molecule, with two electrons provided by NADPH via cytochrome P450 reductase (CPR; NADPH-ferrihemoprotein reductase). Functions as a critical regulatory enzyme of bile acid biosynthesis and cholesterol homeostasis. Catalyzes the hydroxylation of carbon hydrogen bond at 7-alpha position of cholesterol, a rate-limiting step in cholesterol catabolism and bile acid biosynthesis. 7-alpha hydroxylates several oxysterols, including 4beta-hydroxycholesterol and 24-hydroxycholesterol. Catalyzes the oxidation of the 7,8 double bond of 7-dehydrocholesterol and lathosterol with direct and predominant formation of the 7-keto derivatives. In Rattus norvegicus (Rat), this protein is Cytochrome P450 7A1 (Cyp7a1).